Here is an 88-residue protein sequence, read N- to C-terminus: Arminin 1b (88 aa).

The first 18 residues, M1–A18, serve as a signal peptide directing secretion. Residues E19 to A57 constitute a propeptide that is removed on maturation. V85 carries the post-translational modification Valine amide.

It belongs to the arminin family. In terms of tissue distribution, expressed in entodermal epithelium along the body column.

It is found in the secreted. The protein resides in the target cell membrane. Its function is as follows. Antimicrobial peptide with a broad-spectrum antimicrobial activity. Keeps its antibacterial activity under a wide range of salt concentrations that mimic physiological conditions of human blood, which is surprising, since Hydra is an obligate freshwater animal with nearly no salt tolerance. Does not affect red blood cells. In Hydra vulgaris (Hydra), this protein is Arminin 1b.